An 844-amino-acid chain; its full sequence is QSIPHFSTTLNAGSSARKRRSLYLRWGKGSNKIIACVGEGATSVPYQSAEKNDSLYSSTLVKREFPPGFWKDDLIDSLTSSHKVAASDEKRIETLISEIKNMFRCMGYGETNPSAYDTAWVARIPALDGSDNPHFPETVEWILQNQLKDGSWGEGFYFLAYDRILATLACIITLTLWRTGETQVHKGIEFFRTQAGKMEDEADSHRPSGFEIVFPAMLKEAKILGLDLPYDLPFLKQIIEKREAKLKRIPTDVLYALPTTLLYSLEGLQEIVDWQKIMKLQSKDGSFLSSPASTAAVFMRTGNKKCLDFLNFVLKKFGNHVPCHYPLDLFERLWAVDTVERLGIDRHFKEEIKEALDYVYSHWDERGIGWARENPVPDIDDTAMGLRILRLHGYNVSSDVLKTFRDENGEFFCFLGQTQRGVTDMLNVNRCSHVSFPGETIMEEAKLCTERYLRNALENVDAFDKWAFKKNIRGEVEYALKYPWHKSMPRLEARSYIENYGPDDVWLGKTVYMMPYISNEKYLELAKLDFNKVQSIHQTELQDLRRWWKSSGFTDLNFTRERVTEIYFSPASFIFEPEFSKCREVYTKTSNFTVILDDLYDAHGSLDDLKLFTESVKRWDLSLVDQMPQQMKICFVGFYNTFNEIAKEGRESQGRDVLGYIQNVWKVQLEAYTKEAEWSEAKYVPSFNEYIENASVSIALGTVVLISALFTGEVLTDEVLSKIDRGSRFLQLMGLTGRLVNDTKTYQAERGQGEVASAIQCYMKDHPKISEEEALKHVYTVMENSLEELNREFVNNKIPDIYRRLVFETARIMQLFYMQGDGLTLSHDMEIKEHVKNCLFQPVA.

A chloroplast-targeting transit peptide spans 1–46 (QSIPHFSTTLNAGSSARKRRSLYLRWGKGSNKIIACVGEGATSVPY). Substrate is bound at residue K245. Mg(2+) is bound by residues D378 and D380. A DXDD motif motif is present at residues 378 to 381 (DIDD). Position 465 (K465) interacts with substrate. Positions 597, 601, 741, 745, and 749 each coordinate Mg(2+). A DDXXD motif motif is present at residues 597–601 (DDLYD).

It belongs to the terpene synthase family. Tpsd subfamily. Monomer. Requires Mg(2+) as cofactor.

It is found in the plastid. It localises to the chloroplast. The catalysed reaction is (2E,6E,10E)-geranylgeranyl diphosphate = (+)-copalyl diphosphate. The enzyme catalyses (+)-copalyl diphosphate = abieta-7,13-diene + diphosphate. It carries out the reaction (+)-copalyl diphosphate = neoabietadiene + diphosphate. It catalyses the reaction (+)-copalyl diphosphate = abieta-8(14),12-diene + diphosphate. It functions in the pathway terpene metabolism; oleoresin biosynthesis. Its function is as follows. Involved in defensive oleoresin formation in conifers in response to insect attack or other injury. Involved in diterpene (C20) olefins biosynthesis. Bifunctional enzyme that catalyzes two sequential cyclizations of geranylgeranyl diphosphate (GGPP) to abietadiene. The copalyl diphosphate (CPP) intermediate diffuses freely between the 2 active sites in the enzyme. The chain is Bifunctional abietadiene synthase, chloroplastic (LAS) from Abies balsamea (Balsam fir).